A 468-amino-acid polypeptide reads, in one-letter code: Aspartate ammonia-lyase (468 aa).

L-aspartate is bound by residues T99, S138, T139, N140, and T185. Residues 315–324 (GSSIMPGKVN) are SS loop. S316 acts as the Proton acceptor in catalysis. L-aspartate contacts are provided by S317 and K322.

The protein belongs to the class-II fumarase/aspartase family. Aspartase subfamily. As to quaternary structure, homotetramer.

The catalysed reaction is L-aspartate = fumarate + NH4(+). In terms of biological role, catalyzes the reversible conversion of L-aspartate to fumarate and ammonia. In Helicobacter pylori (strain ATCC 700392 / 26695) (Campylobacter pylori), this protein is Aspartate ammonia-lyase (aspA).